A 181-amino-acid polypeptide reads, in one-letter code: Probable nicotinate-nucleotide adenylyltransferase (181 aa).

This sequence belongs to the NadD family.

It carries out the reaction nicotinate beta-D-ribonucleotide + ATP + H(+) = deamido-NAD(+) + diphosphate. It participates in cofactor biosynthesis; NAD(+) biosynthesis; deamido-NAD(+) from nicotinate D-ribonucleotide: step 1/1. Catalyzes the reversible adenylation of nicotinate mononucleotide (NaMN) to nicotinic acid adenine dinucleotide (NaAD). In Campylobacter jejuni subsp. jejuni serotype O:23/36 (strain 81-176), this protein is Probable nicotinate-nucleotide adenylyltransferase.